Reading from the N-terminus, the 397-residue chain is MFFVHFWVLSKPPFYSPNPEYPLHNYDTYLIYIKTALFYPLHKFSCFLCVLGSEVIRDQQTVLLFGILIFSIFVALIAINRKNLELDRFAKWYGLLAFGVLTSLELVVTRSGDIANYFGPPEKIFFLPSYRHYPVVFLPLICVYSLSILYSTLSEENKGMIKTSANAFLKTMLFTLLICSFILNFFPGIKTGEHNFVSMSERSAILKTYDVQPDENLKKLHLNPEIVKKRAKKLEELRLSVFAENNILLYKPDEVKLLPKQSQLQGVLRIYNDVKFVLFQHPISNENRSIIVFNEIYIPQNAKLRFSIALHPDVWDPEKGDGVTFEVYIRDEGFEELVFSKYIDPKHNPEERKWNDFEVDLSRYAGRNVTIIFSTLPGPNNDSRWDWAWWGEPRIEW.

A run of 4 helical transmembrane segments spans residues 62–79, 92–109, 135–154, and 167–189; these read VLLF…LIAI, WYGL…LVVT, VVFL…STLS, and AFLK…FPGI.

The protein localises to the cell membrane. This is an uncharacterized protein from Archaeoglobus fulgidus (strain ATCC 49558 / DSM 4304 / JCM 9628 / NBRC 100126 / VC-16).